Here is a 65-residue protein sequence, read N- to C-terminus: Metallothionein-like protein type 3 (65 aa).

The protein belongs to the metallothionein superfamily. Type 15 family.

Its function is as follows. Metallothioneins have a high content of cysteine residues that bind various heavy metals. This chain is Metallothionein-like protein type 3, found in Carica papaya (Papaya).